The sequence spans 396 residues: Deoxyuridine 5'-triphosphate nucleotidohydrolase (396 aa).

Substrate is bound by residues 280 to 282 (RSS) and 380 to 381 (FG).

It belongs to the dUTPase family. It depends on Mg(2+) as a cofactor.

The enzyme catalyses dUTP + H2O = dUMP + diphosphate + H(+). Involved in nucleotide metabolism: produces dUMP, the immediate precursor of thymidine nucleotides and decreases the intracellular concentration of dUTP to avoid uracil incorporation into viral DNA. The chain is Deoxyuridine 5'-triphosphate nucleotidohydrolase from Varicella-zoster virus (strain Dumas) (HHV-3).